The following is a 711-amino-acid chain: Dendrin (711 aa).

Disordered stretches follow at residues 1-22 (MLDG…DEES), 49-273 (APSR…KKRL), 324-446 (DLNS…SQGL), and 479-677 (PSGV…AELS). Over residues 75 to 84 (PGSPQPPPRR) the composition is skewed to pro residues. Positions 102–134 (LAEVRAREQEKRKAASQEREAKETERKRRKAGG) form a coiled coil. A compositionally biased stretch (basic and acidic residues) spans 105 to 127 (VRAREQEKRKAASQEREAKETER). The interval 113 to 131 (RKAASQEREAKETERKRRK) is nuclear localization. Residues 150–161 (APRVAQLAGLPA) are compositionally biased toward low complexity. The segment at 186–236 (GSAWAGPWGGRRPGPPSYEAHLLLRGSAGTAPRRRWDRPPPYVAPPSYEGP) is interaction with MAGI2. 2 stretches are compositionally biased toward low complexity: residues 252 to 262 (PTSSAPAATPA) and 346 to 356 (APAGSATAAPC). An interaction with ACTN1 region spans residues 341 to 436 (AGTEIAPAGS…LEGWKATRRA (96 aa)). Position 389 is a phosphoserine (serine 389). Positions 408–709 (GGTGWRESLG…IRGTQQGNRK (302 aa)) are interaction with CD2AP and NPHS1. The span at 529-546 (GEAEGGRPGDSTLEERTF) shows a compositional bias: basic and acidic residues.

In terms of assembly, forms a ternary complex with MAGI2 and SH3KBP1; recruits DDN to the cytoplasm. Interacts with MAGI1. Interacts with ACTN1 and may interact with WWC1. Interacts with the podocyte slit diaphragm proteins CD2AP, NPHS1 and NPHS2; the interaction with CD2AP and NPHS1 is direct. In terms of tissue distribution, specifically expressed in brain and kidney. Expressed in kidney glomerular capillary loops (at protein level).

It localises to the cell projection. The protein localises to the dendritic spine membrane. Its subcellular location is the cytoplasm. It is found in the endoplasmic reticulum membrane. The protein resides in the perikaryon. It localises to the nucleus. Functionally, promotes apoptosis of kidney glomerular podocytes. Podocytes are highly specialized cells essential to the ultrafiltration of blood, resulting in the extraction of urine and the retention of protein. The polypeptide is Dendrin (DDN) (Homo sapiens (Human)).